An 888-amino-acid chain; its full sequence is Pyruvate dehydrogenase E1 component (888 aa).

Homodimer. Part of the PDH complex, consisting of multiple copies of pyruvate dehydrogenase (E1), dihydrolipoamide acetyltransferase (E2) and lipoamide dehydrogenase (E3). The cofactor is thiamine diphosphate.

The catalysed reaction is N(6)-[(R)-lipoyl]-L-lysyl-[protein] + pyruvate + H(+) = N(6)-[(R)-S(8)-acetyldihydrolipoyl]-L-lysyl-[protein] + CO2. Its function is as follows. Component of the pyruvate dehydrogenase (PDH) complex, that catalyzes the overall conversion of pyruvate to acetyl-CoA and CO(2). This is Pyruvate dehydrogenase E1 component (aceE) from Buchnera aphidicola subsp. Schizaphis graminum (strain Sg).